Here is a 317-residue protein sequence, read N- to C-terminus: Ribosomal large subunit pseudouridine synthase D (317 aa).

Residues 15–89 (WRLDRALASL…IPLEIVFEDE (75 aa)) enclose the S4 RNA-binding domain. Residue Asp141 is part of the active site.

Belongs to the pseudouridine synthase RluA family.

Its subcellular location is the cytoplasm. The enzyme catalyses uridine(1911/1915/1917) in 23S rRNA = pseudouridine(1911/1915/1917) in 23S rRNA. Functionally, responsible for synthesis of pseudouridine from uracil at positions 1911, 1915 and 1917 in 23S ribosomal RNA. The protein is Ribosomal large subunit pseudouridine synthase D of Zymomonas mobilis subsp. mobilis (strain ATCC 31821 / ZM4 / CP4).